We begin with the raw amino-acid sequence, 214 residues long: Large ribosomal subunit protein uL3 (214 aa).

Q151 carries the N5-methylglutamine modification.

Belongs to the universal ribosomal protein uL3 family. In terms of assembly, part of the 50S ribosomal subunit. Forms a cluster with proteins L14 and L19. In terms of processing, methylated by PrmB.

Its function is as follows. One of the primary rRNA binding proteins, it binds directly near the 3'-end of the 23S rRNA, where it nucleates assembly of the 50S subunit. The sequence is that of Large ribosomal subunit protein uL3 from Magnetococcus marinus (strain ATCC BAA-1437 / JCM 17883 / MC-1).